A 374-amino-acid chain; its full sequence is Anhydro-N-acetylmuramic acid kinase (374 aa).

12-19 serves as a coordination point for ATP; sequence GTSLDGVD.

This sequence belongs to the anhydro-N-acetylmuramic acid kinase family.

The enzyme catalyses 1,6-anhydro-N-acetyl-beta-muramate + ATP + H2O = N-acetyl-D-muramate 6-phosphate + ADP + H(+). It functions in the pathway amino-sugar metabolism; 1,6-anhydro-N-acetylmuramate degradation. The protein operates within cell wall biogenesis; peptidoglycan recycling. Catalyzes the specific phosphorylation of 1,6-anhydro-N-acetylmuramic acid (anhMurNAc) with the simultaneous cleavage of the 1,6-anhydro ring, generating MurNAc-6-P. Is required for the utilization of anhMurNAc either imported from the medium or derived from its own cell wall murein, and thus plays a role in cell wall recycling. This Salmonella arizonae (strain ATCC BAA-731 / CDC346-86 / RSK2980) protein is Anhydro-N-acetylmuramic acid kinase.